The primary structure comprises 179 residues: Diphosphoinositol polyphosphate phosphohydrolase 2 (179 aa).

Substrate is bound by residues arginine 9, 17–19, and 38–40; these read KKR and SSR. Residues 17-143 form the Nudix hydrolase domain; the sequence is KKRAACLCFR…VHAEYLEKLK (127 aa). The Mg(2+) site is built by glycine 49 and glutamate 65. Residues 50–71 carry the Nudix box motif; the sequence is GGMEPEEEPGGAAVREVYEEAG. The active-site Proton acceptor is glutamate 68. Glutamate 69 is a Mg(2+) binding site. Residues 88-90, arginine 114, and lysine 132 each bind substrate; that span reads RKH.

Belongs to the Nudix hydrolase family. DIPP subfamily. Mg(2+) is required as a cofactor. It depends on Mn(2+) as a cofactor.

The protein localises to the cytoplasm. The enzyme catalyses diphospho-myo-inositol polyphosphate + H2O = myo-inositol polyphosphate + phosphate.. It catalyses the reaction 5-diphospho-1D-myo-inositol 1,2,3,4,6-pentakisphosphate + H2O = 1D-myo-inositol hexakisphosphate + phosphate + H(+). It carries out the reaction 3,5-bis(diphospho)-1D-myo-inositol 1,2,4,6-tetrakisphosphate + H2O = 3-diphospho-1D-myo-inositol 1,2,4,5,6-pentakisphosphate + phosphate + 2 H(+). The catalysed reaction is 5-diphospho-1D-myo-inositol 1,3,4,6-tetrakisphosphate + H2O = 1D-myo-inositol 1,3,4,5,6-pentakisphosphate + phosphate + H(+). The enzyme catalyses P(1),P(6)-bis(5'-adenosyl) hexaphosphate + H2O = 2 ATP + 2 H(+). It catalyses the reaction P(1),P(5)-bis(5'-adenosyl) pentaphosphate + H2O = ADP + ATP + 2 H(+). It carries out the reaction 5-phospho-alpha-D-ribose 1-diphosphate + H2O = alpha-D-ribose 1,5-bisphosphate + phosphate + H(+). Functionally, cleaves the beta-phosphate from diphosphoinositol polyphosphates such as PP-InsP5 (diphosphoinositol pentakisphosphate), PP-InsP4 (diphosphoinositol tetrakisphosphate) and [PP]2-InsP4 (bisdiphosphoinositol tetrakisphosphate), suggesting that it may play a role in signal transduction. Diadenosine polyphosphates, particularly Ap6A (P(1),P(6)-bis(5a-adenosyl) hexaphosphate) and Ap5A (P(1),P(5)-bis(5'-adenosyl) pentaphosphate) are downstream effectors of a signaling cascade that regulates cardiac KATP channels, can also be substrates, although with lower preference than the diphosphoinositol polyphosphates. Can also catalyze the hydrolysis of 5-phosphoribose 1-diphosphate, generating the glycolytic activator ribose 1,5-bisphosphate. Does not play a role in U8 snoRNA decapping activity. Binds U8 snoRNA. In Mus musculus (Mouse), this protein is Diphosphoinositol polyphosphate phosphohydrolase 2.